The chain runs to 101 residues: Protein Tat (101 aa).

Residues 1 to 12 are compositionally biased toward basic and acidic residues; it reads MDPVDPRLEPWK. Residues 1–20 form a disordered region; the sequence is MDPVDPRLEPWKHPGSQPKA. The tract at residues 1-24 is interaction with human CREBBP; that stretch reads MDPVDPRLEPWKHPGSQPKAACTS. Residues 1–48 form a transactivation region; the sequence is MDPVDPRLEPWKHPGSQPKAACTSCYCKKCCFHCQVCFTTKGLGISYG. Positions 22, 25, and 27 each coordinate Zn(2+). The cysteine-rich stretch occupies residues 22–37; sequence CTSCYCKKCCFHCQVC. An N6-acetyllysine; by host PCAF modification is found at lysine 28. Positions 30, 33, 34, and 37 each coordinate Zn(2+). Positions 38–48 are core; that stretch reads FTTKGLGISYG. Residues 48 to 57 are compositionally biased toward basic residues; it reads GRKKRRQRRR. The interval 48–101 is disordered; the sequence is GRKKRRQRRRAPQDSQTHQVSLPKQPASQARGDPTGPKESKKKVERETETDPVD. The short motif at 49–57 is the Nuclear localization signal, RNA-binding (TAR), and protein transduction element; sequence RKKRRQRRR. Residues 49–86 form an interaction with the host capping enzyme RNGTT region; that stretch reads RKKRRQRRRAPQDSQTHQVSLPKQPASQARGDPTGPKE. Residues lysine 50 and lysine 51 each carry the N6-acetyllysine; by host EP300 and GCN5L2 modification. An asymmetric dimethylarginine; by host PRMT6 mark is found at arginine 52 and arginine 53. Polar residues predominate over residues 60 to 75; sequence QDSQTHQVSLPKQPAS. Lysine 71 is covalently cross-linked (Glycyl lysine isopeptide (Lys-Gly) (interchain with G-Cter in ubiquitin)). The Cell attachment site signature appears at 78-80; the sequence is RGD. Over residues 83–101 the composition is skewed to basic and acidic residues; that stretch reads GPKESKKKVERETETDPVD.

The protein belongs to the lentiviruses Tat family. As to quaternary structure, interacts with host CCNT1. Associates with the P-TEFb complex composed at least of Tat, P-TEFb (CDK9 and CCNT1), TAR RNA, RNA Pol II. Recruits the HATs CREBBP, TAF1/TFIID, EP300, PCAF and GCN5L2. Interacts with host KAT5/Tip60; this interaction targets the latter to degradation. Interacts with the host deacetylase SIRT1. Interacts with host capping enzyme RNGTT; this interaction stimulates RNGTT. Binds to host KDR, and to the host integrins ITGAV/ITGB3 and ITGA5/ITGB1. Interacts with host KPNB1/importin beta-1 without previous binding to KPNA1/importin alpha-1. Interacts with EIF2AK2. Interacts with host nucleosome assembly protein NAP1L1; this interaction may be required for the transport of Tat within the nucleus, since the two proteins interact at the nuclear rim. Interacts with host C1QBP/SF2P32; this interaction involves lysine-acetylated Tat. Interacts with the host chemokine receptors CCR2, CCR3 and CXCR4. Interacts with host DPP4/CD26; this interaction may trigger an anti-proliferative effect. Interacts with host LDLR. Interacts with the host extracellular matrix metalloproteinase MMP1. Interacts with host PRMT6; this interaction mediates Tat's methylation. Interacts with, and is ubiquitinated by MDM2/Hdm2. Interacts with host PSMC3 and HTATIP2. Interacts with STAB1; this interaction may overcome SATB1-mediated repression of IL2 and IL2RA (interleukin) in T cells by binding to the same domain than HDAC1. Interacts (when acetylated) with human CDK13, thereby increasing HIV-1 mRNA splicing and promoting the production of the doubly spliced HIV-1 protein Nef. Interacts with host TBP; this interaction modulates the activity of transcriptional pre-initiation complex. Interacts with host RELA. Interacts with host PLSCR1; this interaction negatively regulates Tat transactivation activity by altering its subcellular distribution. Asymmetrical arginine methylation by host PRMT6 seems to diminish the transactivation capacity of Tat and affects the interaction with host CCNT1. Post-translationally, acetylation by EP300, CREBBP, GCN5L2/GCN5 and PCAF regulates the transactivation activity of Tat. EP300-mediated acetylation of Lys-50 promotes dissociation of Tat from the TAR RNA through the competitive binding to PCAF's bromodomain. In addition, the non-acetylated Tat's N-terminus can also interact with PCAF. PCAF-mediated acetylation of Lys-28 enhances Tat's binding to CCNT1. Lys-50 is deacetylated by SIRT1. In terms of processing, polyubiquitination by host MDM2 does not target Tat to degradation, but activates its transactivation function and fosters interaction with CCNT1 and TAR RNA. Phosphorylated by EIF2AK2 on serine and threonine residues adjacent to the basic region important for TAR RNA binding and function. Phosphorylation of Tat by EIF2AK2 is dependent on the prior activation of EIF2AK2 by dsRNA.

The protein localises to the host nucleus. The protein resides in the host nucleolus. It localises to the host cytoplasm. Its subcellular location is the secreted. Transcriptional activator that increases RNA Pol II processivity, thereby increasing the level of full-length viral transcripts. Recognizes a hairpin structure at the 5'-LTR of the nascent viral mRNAs referred to as the transactivation responsive RNA element (TAR) and recruits the cyclin T1-CDK9 complex (P-TEFb complex) that will in turn hyperphosphorylate the RNA polymerase II to allow efficient elongation. The CDK9 component of P-TEFb and other Tat-activated kinases hyperphosphorylate the C-terminus of RNA Pol II that becomes stabilized and much more processive. Other factors such as HTATSF1/Tat-SF1, SUPT5H/SPT5, and HTATIP2 are also important for Tat's function. Besides its effect on RNA Pol II processivity, Tat induces chromatin remodeling of proviral genes by recruiting the histone acetyltransferases (HATs) CREBBP, EP300 and PCAF to the chromatin. This also contributes to the increase in proviral transcription rate, especially when the provirus integrates in transcriptionally silent region of the host genome. To ensure maximal activation of the LTR, Tat mediates nuclear translocation of NF-kappa-B by interacting with host RELA. Through its interaction with host TBP, Tat may also modulate transcription initiation. Tat can reactivate a latently infected cell by penetrating in it and transactivating its LTR promoter. In the cytoplasm, Tat is thought to act as a translational activator of HIV-1 mRNAs. In terms of biological role, extracellular circulating Tat can be endocytosed by surrounding uninfected cells via the binding to several surface receptors such as CD26, CXCR4, heparan sulfate proteoglycans (HSPG) or LDLR. Neurons are rarely infected, but they internalize Tat via their LDLR. Through its interaction with nuclear HATs, Tat is potentially able to control the acetylation-dependent cellular gene expression. Modulates the expression of many cellular genes involved in cell survival, proliferation or in coding for cytokines or cytokine receptors. Tat plays a role in T-cell and neurons apoptosis. Tat induced neurotoxicity and apoptosis probably contribute to neuroAIDS. Circulating Tat also acts as a chemokine-like and/or growth factor-like molecule that binds to specific receptors on the surface of the cells, affecting many cellular pathways. In the vascular system, Tat binds to ITGAV/ITGB3 and ITGA5/ITGB1 integrins dimers at the surface of endothelial cells and competes with bFGF for heparin-binding sites, leading to an excess of soluble bFGF. In Homo sapiens (Human), this protein is Protein Tat.